A 342-amino-acid polypeptide reads, in one-letter code: Metalloendoproteinase 4-MMP (342 aa).

The N-terminal stretch at Met-1 to Ala-34 is a signal peptide. The propeptide at Arg-35–Lys-124 is activation peptide. A Cysteine switch motif is present at residues Pro-104–Asp-111. The Zn(2+) site is built by Cys-106 and His-252. Glu-253 is a catalytic residue. His-256 and His-262 together coordinate Zn(2+). A glycan (N-linked (GlcNAc...) asparagine) is linked at Asn-300. The GPI-anchor amidated aspartate moiety is linked to residue Asp-317. A propeptide spans Gly-318 to Trp-342 (removed in mature form).

Belongs to the peptidase M10A family. Matrix metalloproteinases (MMPs) subfamily. Requires Zn(2+) as cofactor. Mostly expressed in flowers and stems, and, to a lower extent, in leaves and roots.

Its subcellular location is the cell membrane. Repressed by acetohydroxamic acid (AHA). In terms of biological role, matrix metalloproteinases (MMPs) or matrixins may play a role in the degradation and remodeling of the extracellular matrix (ECM) during development or in response to stresses. Active on myelin basic protein (MBP) and, to some extent, on McaPLGLDpaAR-NH(2) (QF24) and beta-casein. This chain is Metalloendoproteinase 4-MMP, found in Arabidopsis thaliana (Mouse-ear cress).